A 547-amino-acid chain; its full sequence is Probable ABC transporter periplasmic-binding protein SapA (547 aa).

The first 21 residues, 1-21 (MRQVLSSLLVIAGLVSGQAIA), serve as a signal peptide directing secretion.

The protein belongs to the bacterial solute-binding protein 5 family.

The protein localises to the periplasm. In terms of biological role, not part of a putrescine export system. Very similar to a S.typhimurium protein implicated in antimicrobial peptide resistance, but the SapBCDF operon in E.coli is implicated in putrescine export. This chain is Probable ABC transporter periplasmic-binding protein SapA (sapA), found in Escherichia coli (strain K12).